The chain runs to 161 residues: MAGKRRKKGRSHSTRPATPTVPKWIQYDPEEIEEIIVDLARKGYGPSMIGIILRDQFGIPLVKPILGKSITEVLEERGIKMVVPEDLFRLIEKAVNLRRHLEEHPKDTHAKKGLLDLESKIRRLAEYYKRVGKLPRDWKYDPQQAKLLVAGGLYREEKPAS.

The segment covering 1–13 (MAGKRRKKGRSHS) has biased composition (basic residues). The tract at residues 1 to 22 (MAGKRRKKGRSHSTRPATPTVP) is disordered.

The protein belongs to the universal ribosomal protein uS15 family. In terms of assembly, part of the 30S ribosomal subunit.

The sequence is that of Small ribosomal subunit protein uS15 from Hyperthermus butylicus (strain DSM 5456 / JCM 9403 / PLM1-5).